The following is a 98-amino-acid chain: MTSRFMTDPHAMRDMAGRFEVHAQTVEDEARRMWASAQNISGAGWSGMAEATSLDTMTQMNQAFRNIVNMLHGVRDGLVRDANNYEQQEQASQQILSS.

Belongs to the WXG100 family. CFP-10 subfamily. Forms a tight 1:1 complex with EsxV. The complex is destabilized at low pH. Unfolding of the proteins is required for dissociation of the complex and membrane binding.

Its subcellular location is the secreted. This Mycobacterium tuberculosis (strain ATCC 25618 / H37Rv) protein is ESAT-6-like protein EsxW.